Consider the following 420-residue polypeptide: Gamma-glutamyl phosphate reductase (420 aa).

This sequence belongs to the gamma-glutamyl phosphate reductase family.

The protein localises to the cytoplasm. The catalysed reaction is L-glutamate 5-semialdehyde + phosphate + NADP(+) = L-glutamyl 5-phosphate + NADPH + H(+). Its pathway is amino-acid biosynthesis; L-proline biosynthesis; L-glutamate 5-semialdehyde from L-glutamate: step 2/2. Catalyzes the NADPH-dependent reduction of L-glutamate 5-phosphate into L-glutamate 5-semialdehyde and phosphate. The product spontaneously undergoes cyclization to form 1-pyrroline-5-carboxylate. This Shewanella amazonensis (strain ATCC BAA-1098 / SB2B) protein is Gamma-glutamyl phosphate reductase.